Consider the following 294-residue polypeptide: Cytidine deaminase (294 aa).

2 CMP/dCMP-type deaminase domains span residues 48–168 and 186–294; these read DEDA…FGPK and LTGD…VLLG. Residue 89-91 participates in substrate binding; it reads NME. A Zn(2+)-binding site is contributed by His102. The active-site Proton donor is Glu104. Positions 129 and 132 each coordinate Zn(2+).

Belongs to the cytidine and deoxycytidylate deaminase family. In terms of assembly, homodimer. Zn(2+) serves as cofactor.

The catalysed reaction is cytidine + H2O + H(+) = uridine + NH4(+). It carries out the reaction 2'-deoxycytidine + H2O + H(+) = 2'-deoxyuridine + NH4(+). Functionally, this enzyme scavenges exogenous and endogenous cytidine and 2'-deoxycytidine for UMP synthesis. The polypeptide is Cytidine deaminase (Salmonella agona (strain SL483)).